The chain runs to 438 residues: Succinyl-CoA:glutarate CoA-transferase (438 aa).

The transit peptide at 1-31 directs the protein to the mitochondrion; it reads MLATLARVAALRRTCLFSGRGGGRGLWTGRP. D205 serves as the catalytic Nucleophile. K394 is modified (N6-acetyllysine).

This sequence belongs to the CoA-transferase III family. Highly expressed in kidney. Intermediate expression in liver, skeletal muscle and pancreas. Little to no expression detected in other tissues examined.

Its subcellular location is the mitochondrion. It carries out the reaction glutarate + succinyl-CoA = glutaryl-CoA + succinate. The enzyme catalyses 3-hydroxy-3-methylglutarate + succinyl-CoA = (3S)-3-hydroxy-3-methylglutaryl-CoA + succinate. The catalysed reaction is 3-hydroxy-3-methylglutarate + glutaryl-CoA = (3S)-3-hydroxy-3-methylglutaryl-CoA + glutarate. It catalyses the reaction hexanedioate + glutaryl-CoA = hexanedioyl-CoA + glutarate. It carries out the reaction itaconate + glutaryl-CoA = itaconyl-CoA + glutarate. The enzyme catalyses itaconate + succinyl-CoA = itaconyl-CoA + succinate. Its activity is regulated as follows. Inhibited by valsartan and losartan carboxylate. Its function is as follows. Coenzyme A (CoA) transferase that reversibly catalyzes the transfer of a CoA moiety from a dicarboxyl-CoA to a dicarboxylate in a metabolite recycling process. Displays preference for succinyl-CoA and glutarate-CoA as dicarboxyl-CoA donors and glutarate, succinate, adipate/hexanedioate, itaconate and 3-hydroxy-3-methylglutarate as dicarboxylate acceptors. Acts on intermediates or end products of lysine and tryptophan degradation pathway, in particular catalyzes succinyl-CoA-dependent reesterification of free glutarate into glutaryl-CoA to prevent renal excretion of glutarate. Upon inflammation, may convert macrophage-derived itaconate to itaconyl-CoA in erythroid precursors where it negatively regulates the TCA cycle and heme synthesis to limit erythroid differentiation in the context of stress erythropoiesis. This chain is Succinyl-CoA:glutarate CoA-transferase, found in Homo sapiens (Human).